Here is a 165-residue protein sequence, read N- to C-terminus: Peptide methionine sulfoxide reductase MsrA (165 aa).

Cysteine 10 is a catalytic residue.

It belongs to the MsrA Met sulfoxide reductase family.

The catalysed reaction is L-methionyl-[protein] + [thioredoxin]-disulfide + H2O = L-methionyl-(S)-S-oxide-[protein] + [thioredoxin]-dithiol. The enzyme catalyses [thioredoxin]-disulfide + L-methionine + H2O = L-methionine (S)-S-oxide + [thioredoxin]-dithiol. Functionally, has an important function as a repair enzyme for proteins that have been inactivated by oxidation. Catalyzes the reversible oxidation-reduction of methionine sulfoxide in proteins to methionine. The protein is Peptide methionine sulfoxide reductase MsrA of Campylobacter jejuni subsp. jejuni serotype O:6 (strain 81116 / NCTC 11828).